The chain runs to 157 residues: Transcriptional repressor NrdR (157 aa).

A zinc finger lies at C3–C34. Residues L49–D139 enclose the ATP-cone domain.

It belongs to the NrdR family. Zn(2+) is required as a cofactor.

Functionally, negatively regulates transcription of bacterial ribonucleotide reductase nrd genes and operons by binding to NrdR-boxes. This is Transcriptional repressor NrdR from Caulobacter vibrioides (strain ATCC 19089 / CIP 103742 / CB 15) (Caulobacter crescentus).